We begin with the raw amino-acid sequence, 369 residues long: Putative agmatine deiminase 2 (369 aa).

Cysteine 356 serves as the catalytic Amidino-cysteine intermediate.

This sequence belongs to the agmatine deiminase family.

The enzyme catalyses agmatine + H2O = N-carbamoylputrescine + NH4(+). The sequence is that of Putative agmatine deiminase 2 from Listeria monocytogenes serovar 1/2a (strain ATCC BAA-679 / EGD-e).